The primary structure comprises 234 residues: Fibronectin type III domain-containing protein 4 (234 aa).

Positions 1–44 (MPSGCHSSPPSGLRGDMASLVPLSPYLSPTVLLLVSCDLGFVRA) are cleaved as a signal peptide. The Extracellular portion of the chain corresponds to 45–167 (DRPPSPVNVT…GLDGERPLQT (123 aa)). The Fibronectin type-III domain maps to 47 to 140 (PPSPVNVTVT…PRVHFRTLKG (94 aa)). Asn-52, Asn-97, and Asn-147 each carry an N-linked (GlcNAc...) asparagine glycan. Residues 122–160 (GLRGESPPGPRVHFRTLKGSDRLPSNSSSPGDITVEGLD) are disordered. Residues 168–188 (GEVVIIVVVLLMWAAVIGLFC) form a helical membrane-spanning segment. Over 189–234 (RQYDIIKDNDSNNNPKEKGKGPEQSPQGRPVGTRQKKSPSINTIDV) the chain is Cytoplasmic. Positions 197–209 (NDSNNNPKEKGKG) are enriched in basic and acidic residues. The interval 197-234 (NDSNNNPKEKGKGPEQSPQGRPVGTRQKKSPSINTIDV) is disordered.

Highly expressed in the liver and the brain, including in the cortex, hypothalamus and hippocampus. Also expressed in adipose tissue.

It localises to the membrane. It is found in the secreted. In terms of biological role, has anti-inflammatory properties. In the colon, acts on macrophages to down-regulate inflammation. May suppress osteoclastogenesis and mature osteoclast resorptive function. In white adipose tissue, decreases local inflammation, via interaction with GPR116. Also required for proper systemic glucose tolerance, specifically sensitizing white adipocytes to insulin and promoting glucose uptake. The insulin sensitizing function in adipose tissue is mediated by interaction with ADGRF5/GPR116 and activation of cAMP signaling. The polypeptide is Fibronectin type III domain-containing protein 4 (FNDC4) (Homo sapiens (Human)).